The chain runs to 157 residues: S-ribosylhomocysteine lyase (157 aa).

Fe cation-binding residues include His54, His58, and Cys124.

It belongs to the LuxS family. In terms of assembly, homodimer. Fe cation serves as cofactor.

It catalyses the reaction S-(5-deoxy-D-ribos-5-yl)-L-homocysteine = (S)-4,5-dihydroxypentane-2,3-dione + L-homocysteine. Its function is as follows. Involved in the synthesis of autoinducer 2 (AI-2) which is secreted by bacteria and is used to communicate both the cell density and the metabolic potential of the environment. The regulation of gene expression in response to changes in cell density is called quorum sensing. Catalyzes the transformation of S-ribosylhomocysteine (RHC) to homocysteine (HC) and 4,5-dihydroxy-2,3-pentadione (DPD). This chain is S-ribosylhomocysteine lyase, found in Lacticaseibacillus paracasei (strain ATCC 334 / BCRC 17002 / CCUG 31169 / CIP 107868 / KCTC 3260 / NRRL B-441) (Lactobacillus paracasei).